Here is a 177-residue protein sequence, read N- to C-terminus: Interleukin-1 receptor antagonist protein (177 aa).

An N-terminal signal peptide occupies residues Met1 to Cys25. The cysteines at positions 91 and 141 are disulfide-linked. The N-linked (GlcNAc...) asparagine glycan is linked to Asn109.

Belongs to the IL-1 family.

The protein resides in the secreted. Functionally, anti-inflammatory antagonist of interleukin-1 family of proinflammatory cytokines such as interleukin-1beta/IL1B and interleukin-1alpha/IL1A. Protects from immune dysregulation and uncontrolled systemic inflammation triggered by IL1 for a range of innate stimulatory agents such as pathogens. This is Interleukin-1 receptor antagonist protein (IL1RN) from Equus caballus (Horse).